The following is a 613-amino-acid chain: Glutamyl-tRNA(Gln) amidotransferase subunit E (613 aa).

It belongs to the GatB/GatE family. GatE subfamily. As to quaternary structure, heterodimer of GatD and GatE.

It carries out the reaction L-glutamyl-tRNA(Gln) + L-glutamine + ATP + H2O = L-glutaminyl-tRNA(Gln) + L-glutamate + ADP + phosphate + H(+). In terms of biological role, allows the formation of correctly charged Gln-tRNA(Gln) through the transamidation of misacylated Glu-tRNA(Gln) in organisms which lack glutaminyl-tRNA synthetase. The reaction takes place in the presence of glutamine and ATP through an activated gamma-phospho-Glu-tRNA(Gln). The GatDE system is specific for glutamate and does not act on aspartate. The protein is Glutamyl-tRNA(Gln) amidotransferase subunit E of Archaeoglobus fulgidus (strain ATCC 49558 / DSM 4304 / JCM 9628 / NBRC 100126 / VC-16).